Reading from the N-terminus, the 81-residue chain is uncharacterized protein (81 aa).

To M.thermoautotrophicum MTH886.

This is an uncharacterized protein from Methanocaldococcus jannaschii (strain ATCC 43067 / DSM 2661 / JAL-1 / JCM 10045 / NBRC 100440) (Methanococcus jannaschii).